A 251-amino-acid polypeptide reads, in one-letter code: MRKNIVAGNWKMNKNLQEGIALAKELNEALAADKPNCDVVICTPFIHLASVTPIVDKAVIGVGAENCADKVSGAYTGEVSAEMVASTGAEYVILGHSERRAYYHETVEILEEKVKLALANNLKPIFCIGEVLEEREANKQNEVVAAQLASVFSLSAEDFSKIILAYEPVWAIGTGKTATAEQAQEIHAFIRSLIADKYGKEVADNTSILYGGSCKPSNAKELFANPDVDGGLIGGAALKVVDFKGIIDAFK.

Position 9 to 11 (9 to 11 (NWK)) interacts with substrate. His-96 acts as the Electrophile in catalysis. Residue Glu-167 is the Proton acceptor of the active site. Substrate contacts are provided by residues Gly-173, Ser-213, and 234–235 (GG).

Belongs to the triosephosphate isomerase family. In terms of assembly, homodimer.

It localises to the cytoplasm. It carries out the reaction D-glyceraldehyde 3-phosphate = dihydroxyacetone phosphate. It functions in the pathway carbohydrate biosynthesis; gluconeogenesis. Its pathway is carbohydrate degradation; glycolysis; D-glyceraldehyde 3-phosphate from glycerone phosphate: step 1/1. In terms of biological role, involved in the gluconeogenesis. Catalyzes stereospecifically the conversion of dihydroxyacetone phosphate (DHAP) to D-glyceraldehyde-3-phosphate (G3P). The polypeptide is Triosephosphate isomerase (Phocaeicola vulgatus (strain ATCC 8482 / DSM 1447 / JCM 5826 / CCUG 4940 / NBRC 14291 / NCTC 11154) (Bacteroides vulgatus)).